Reading from the N-terminus, the 25-residue chain is Chrysophsin-1 (25 aa).

A Histidine amide modification is found at H25.

As to expression, gill. Localized in certain epithelial cells lining the surface of secondary lamellae and eosinophilic granule cell-like cells at the base of secondary lamellae.

It localises to the secreted. In terms of biological role, has antibacterial activity against Gram-positive bacteria B.subtilis ATCC 6633, L.garvieae ATCC 49156 and S.iniae F-8502, and Gram-negative bacteria E.coli WT-2, V.anguillarum ATCC 19264, V.penaeicida KHA, V.harveyi ATCC 14126, V.vulnificus ATCC 33148, A.salmonicida NCMB 1102 and P.putida ATCC 12633. Has hemolytic activity against human red blood cells. Seems to disrupt the membranes by adopting an alpha helical conformation. May play a significant role in innate host defense. The sequence is that of Chrysophsin-1 from Pagrus major (Red sea bream).